The chain runs to 1910 residues: A disintegrin and metalloproteinase with thrombospondin motifs 20 (1910 aa).

A signal peptide spans 1–21 (MWVAKWLTGLLYHLSLFITRS). A propeptide spanning residues 22–253 (WEVDFHPRQE…DERRHSRKKR (232 aa)) is cleaved from the precursor. N-linked (GlcNAc...) asparagine glycans are attached at residues asparagine 92 and asparagine 191. The Peptidase M12B domain occupies 259–467 (RYIEIMVTAD…GYGECLLDKP (209 aa)). Disulfide bonds link cysteine 334–cysteine 387, cysteine 363–cysteine 369, cysteine 381–cysteine 462, cysteine 419–cysteine 446, cysteine 489–cysteine 511, cysteine 500–cysteine 521, cysteine 506–cysteine 540, cysteine 534–cysteine 545, cysteine 568–cysteine 605, cysteine 572–cysteine 610, and cysteine 583–cysteine 595. Histidine 403 contacts Zn(2+). The active site involves glutamate 404. Zn(2+) contacts are provided by histidine 407 and histidine 413. Residue asparagine 445 is glycosylated (N-linked (GlcNAc...) asparagine). The region spanning 468–555 (DEEIYNLPSE…VNKETETRPV (88 aa)) is the Disintegrin domain. The TSP type-1 1 domain maps to 556–611 (NGEWGPWEPYSSCSRTCGGGIESATRRCNRPEPRNGGNYCVGRRMKFRSCNTDSCP). Asparagine 702, asparagine 717, asparagine 728, asparagine 809, and asparagine 870 each carry an N-linked (GlcNAc...) asparagine glycan. Residues 724 to 846 (TGVFNSSHYG…FNIPLEERSD (123 aa)) form a spacer region. TSP type-1 domains are found at residues 846 to 904 (DMFT…NTDC), 905 to 961 (ELRW…QELC), 966 to 1023 (VFTR…FSCP), 1024 to 1073 (SWAA…SPCE), 1076 to 1135 (TCAS…TPCS), 1152 to 1206 (KMAQ…DCFT), 1207 to 1264 (PCGE…AACP), 1304 to 1356 (RGNQ…QCGP), 1358 to 1416 (PCPQ…HACP), 1417 to 1475 (ADVS…VRCP), 1476 to 1531 (SWKA…QDCV), 1535 to 1588 (GMER…NPPC), 1589 to 1652 (NYIV…INSC), and 1654 to 1710 (HLAT…NDCK). An N-linked (GlcNAc...) asparagine glycan is attached at asparagine 1061. Asparagine 1456 is a glycosylation site (N-linked (GlcNAc...) asparagine). N-linked (GlcNAc...) asparagine glycans are attached at residues asparagine 1542 and asparagine 1572. Residues 1711–1910 (SFTTCKEIQV…MTTGLPIQVI (200 aa)) enclose the GON domain. Asparagine 1763, asparagine 1781, and asparagine 1852 each carry an N-linked (GlcNAc...) asparagine glycan.

Zn(2+) serves as cofactor. Post-translationally, the precursor is cleaved by a furin endopeptidase. In terms of processing, glycosylated. Can be O-fucosylated by POFUT2 on a serine or a threonine residue found within the consensus sequence C1-X(2)-(S/T)-C2-G of the TSP type-1 repeat domains where C1 and C2 are the first and second cysteine residue of the repeat, respectively. Fucosylated repeats can then be further glycosylated by the addition of a beta-1,3-glucose residue by the glucosyltransferase, B3GALTL. Fucosylation mediates the efficient secretion of ADAMTS family members. Can also be C-glycosylated with one or two mannose molecules on tryptophan residues within the consensus sequence W-X-X-W of the TPRs, and N-glycosylated. These other glycosylations can also facilitate secretion. Very sparingly expressed, although is detected at low levels in testis, prostate, ovary, heart, placenta, lung and pancreas. Overexpressed in several brain, colon and breast carcinomas.

The protein resides in the secreted. Its subcellular location is the extracellular space. It is found in the extracellular matrix. Functionally, may play a role in tissue-remodeling process occurring in both normal and pathological conditions. May have a protease-independent function in the transport from the endoplasmic reticulum to the Golgi apparatus of secretory cargos, mediated by the GON domain. The chain is A disintegrin and metalloproteinase with thrombospondin motifs 20 (ADAMTS20) from Homo sapiens (Human).